Consider the following 277-residue polypeptide: Hemin import ATP-binding protein HmuV (277 aa).

Positions 19–259 (VEVADLNYSV…AIIEEAFGHR (241 aa)) constitute an ABC transporter domain. Residue 51–58 (GRNGAGKS) coordinates ATP.

The protein belongs to the ABC transporter superfamily. Heme (hemin) importer (TC 3.A.1.14.5) family. As to quaternary structure, the complex is composed of two ATP-binding proteins (HmuV), two transmembrane proteins (HmuU) and a solute-binding protein (HmuT).

It localises to the cell membrane. Part of the ABC transporter complex HmuTUV involved in hemin import. Responsible for energy coupling to the transport system. This is Hemin import ATP-binding protein HmuV from Deinococcus geothermalis (strain DSM 11300 / CIP 105573 / AG-3a).